The following is a 268-amino-acid chain: Phosphatidylglycerol--prolipoprotein diacylglyceryl transferase (268 aa).

Transmembrane regions (helical) follow at residues 27–47 (PALRWYGFTYLVGFVAAMWLL), 66–86 (LLFYGFLGVILGGRIGYVLFY), 104–124 (GGMSFHGGLMGVITAMIYIAW), 130–150 (FFAVADMVAPVVPIGLGAGRI), 181–201 (PSQLYQFALEGVALFLLLYWF), 208–228 (VGAVSGMFLLGYGIFRVIVET), and 242–262 (FMTMGQILSVPMVLFGLYLIL). Position 149 (Arg-149) interacts with a 1,2-diacyl-sn-glycero-3-phospho-(1'-sn-glycerol).

Belongs to the Lgt family.

The protein resides in the cell inner membrane. It catalyses the reaction L-cysteinyl-[prolipoprotein] + a 1,2-diacyl-sn-glycero-3-phospho-(1'-sn-glycerol) = an S-1,2-diacyl-sn-glyceryl-L-cysteinyl-[prolipoprotein] + sn-glycerol 1-phosphate + H(+). The protein operates within protein modification; lipoprotein biosynthesis (diacylglyceryl transfer). Catalyzes the transfer of the diacylglyceryl group from phosphatidylglycerol to the sulfhydryl group of the N-terminal cysteine of a prolipoprotein, the first step in the formation of mature lipoproteins. This chain is Phosphatidylglycerol--prolipoprotein diacylglyceryl transferase, found in Shewanella sp. (strain MR-4).